Reading from the N-terminus, the 497-residue chain is Glycerol kinase (497 aa).

T12 contacts ADP. Positions 12, 13, and 14 each coordinate ATP. Sn-glycerol 3-phosphate is bound at residue T12. R16 contacts ADP. Positions 82, 83, 134, and 243 each coordinate sn-glycerol 3-phosphate. Glycerol-binding residues include R82, E83, Y134, D243, and Q244. The ADP site is built by T265 and G308. ATP-binding residues include T265, G308, Q312, and G409. Positions 409 and 413 each coordinate ADP.

The protein belongs to the FGGY kinase family.

It catalyses the reaction glycerol + ATP = sn-glycerol 3-phosphate + ADP + H(+). The protein operates within polyol metabolism; glycerol degradation via glycerol kinase pathway; sn-glycerol 3-phosphate from glycerol: step 1/1. With respect to regulation, inhibited by fructose 1,6-bisphosphate (FBP). Key enzyme in the regulation of glycerol uptake and metabolism. Catalyzes the phosphorylation of glycerol to yield sn-glycerol 3-phosphate. This chain is Glycerol kinase, found in Oleidesulfovibrio alaskensis (strain ATCC BAA-1058 / DSM 17464 / G20) (Desulfovibrio alaskensis).